A 350-amino-acid chain; its full sequence is GTPase Obg (350 aa).

In terms of domain architecture, Obg spans 1 to 158; sequence MFIDSVKITL…RLVRLELKLI (158 aa). The OBG-type G domain occupies 159–339; that stretch reads ADVGLVGFPN…LKFMLLEEIK (181 aa). GTP is bound by residues 165–172, 190–194, 212–215, 280–283, and 320–322; these read GFPNVGKS, FTTLT, DIPG, SKSD, and SSL. Mg(2+)-binding residues include Ser172 and Thr192.

The protein belongs to the TRAFAC class OBG-HflX-like GTPase superfamily. OBG GTPase family. In terms of assembly, monomer. It depends on Mg(2+) as a cofactor.

Its subcellular location is the cytoplasm. In terms of biological role, an essential GTPase which binds GTP, GDP and possibly (p)ppGpp with moderate affinity, with high nucleotide exchange rates and a fairly low GTP hydrolysis rate. Plays a role in control of the cell cycle, stress response, ribosome biogenesis and in those bacteria that undergo differentiation, in morphogenesis control. This Campylobacter jejuni (strain RM1221) protein is GTPase Obg.